We begin with the raw amino-acid sequence, 987 residues long: Collagen alpha-1(I) chain (987 aa).

The tract at residues glycine 1–proline 987 is disordered. Residues proline 20–methionine 39 are compositionally biased toward low complexity. Residues asparagine 51–glutamate 65 show a composition bias toward basic and acidic residues. Position 93 is a phosphoserine (serine 93). Low complexity-rich tracts occupy residues aspartate 101–asparagine 117 and alanine 141–alanine 153. Residues proline 155–phenylalanine 167 are compositionally biased toward pro residues. 10 stretches are compositionally biased toward low complexity: residues alanine 201 to proline 251, lysine 354 to arginine 380, alanine 389 to proline 408, alanine 422 to alanine 444, asparagine 516 to glutamine 543, proline 602 to alanine 614, alanine 627 to alanine 654, proline 662 to proline 677, alanine 686 to valine 696, and serine 737 to proline 752. The span at glycine 756–glycine 765 shows a compositional bias: gly residues. Over residues proline 799–alanine 809 the composition is skewed to pro residues. Over residues proline 811–serine 826 the composition is skewed to low complexity. Positions alanine 845–valine 860 are enriched in pro residues. Residues arginine 896–aspartate 907 show a composition bias toward basic and acidic residues. Residues proline 923–proline 956 show a composition bias toward low complexity. A compositionally biased stretch (pro residues) spans valine 972–proline 987.

It belongs to the fibrillar collagen family. As to quaternary structure, trimers of one alpha 2(I) and two alpha 1(I) chains. In terms of processing, prolines at the third position of the tripeptide repeating unit (G-X-Y) are hydroxylated in some or all of the chains. As to expression, forms the fibrils of tendon, ligaments and bones. In bones, the fibrils are mineralized with calcium hydroxyapatite.

The protein localises to the secreted. It localises to the extracellular space. It is found in the extracellular matrix. Functionally, type I collagen is a member of group I collagen (fibrillar forming collagen). The chain is Collagen alpha-1(I) chain from Orycteropus afer (Aardvark).